The following is a 404-amino-acid chain: Glucose-1-phosphate adenylyltransferase (404 aa).

Alpha-D-glucose 1-phosphate is bound by residues tyrosine 99, glycine 164, 179 to 180 (EK), and serine 197.

It belongs to the bacterial/plant glucose-1-phosphate adenylyltransferase family.

It catalyses the reaction alpha-D-glucose 1-phosphate + ATP + H(+) = ADP-alpha-D-glucose + diphosphate. It participates in capsule biogenesis; capsule polysaccharide biosynthesis. It functions in the pathway glycan biosynthesis; glycogen biosynthesis. In terms of biological role, involved in the biosynthesis of ADP-glucose, a building block, required in the biosynthesis of maltose-1-phosphate (M1P) and in the elongation reactions to produce linear alpha-1,4-glucans. Catalyzes the reaction between ATP and alpha-D-glucose 1-phosphate (G1P) to produce pyrophosphate and ADP-Glc. This chain is Glucose-1-phosphate adenylyltransferase, found in Mycobacterium leprae (strain Br4923).